Consider the following 379-residue polypeptide: MKLVQFFEIGQQLLKTKDFVEKNKNTTVVTLSYEKLLTLQNSTGGDNLQVTATLPNPSPEIFKKMIAIVSNLRKEENGFFATNQMGTSSNRAKSTDTPAVSTSQNVGGANEPKTILISKFLNKFILLLPFFKNSLQTLSDRLVQQEKMLKELNSTFTKITESQKSLKQLYKKTISQYAVVSSKFIVQQNNFKKFQKNLKQFASEQRLLKFLPKLRYLPTSQTKMYEIVELFMKKFVDPKLSYPMEQIYDQKLKFTSKKIAATRKQKWQRLEKYFGGITKMAKMNTKQISKNVAIIIGQQEEMNAVHECRKLGMKIFAVVDTNCNPKFVDHIIPANDDSRNSIKYILGEMLTYIRLGQKLRKKVSLRAKIQQNRKKRFAY.

The N-terminal extension stretch occupies residues 1 to 94 (MKLVQFFEIG…MGTSSNRAKS (94 aa)). The segment at 83-106 (NQMGTSSNRAKSTDTPAVSTSQNV) is disordered.

This sequence belongs to the universal ribosomal protein uS2 family.

It localises to the plastid. The protein localises to the chloroplast. The sequence is that of Small ribosomal subunit protein uS2cy (rps2-2) from Tetradesmus obliquus (Green alga).